We begin with the raw amino-acid sequence, 374 residues long: Pectate lyase 3 (374 aa).

A signal peptide spans 1–22 (MKYLLPSAAAGLLLLAAQPTMA). C93 and C176 form a disulfide bridge. Ca(2+) contacts are provided by D150, D152, E187, and D191. R239 is an active-site residue. A disulfide bridge links C350 with C373.

The protein belongs to the polysaccharide lyase 1 family. PLADES subfamily. It depends on Ca(2+) as a cofactor.

Its subcellular location is the secreted. It carries out the reaction Eliminative cleavage of (1-&gt;4)-alpha-D-galacturonan to give oligosaccharides with 4-deoxy-alpha-D-galact-4-enuronosyl groups at their non-reducing ends.. Its pathway is glycan metabolism; pectin degradation; 2-dehydro-3-deoxy-D-gluconate from pectin: step 2/5. In terms of biological role, involved in maceration and soft-rotting of plant tissue. The protein is Pectate lyase 3 (pel3) of Pectobacterium carotovorum subsp. carotovorum (Erwinia carotovora subsp. carotovora).